The chain runs to 419 residues: Gamma-glutamyl phosphate reductase (419 aa).

This sequence belongs to the gamma-glutamyl phosphate reductase family.

The protein resides in the cytoplasm. It catalyses the reaction L-glutamate 5-semialdehyde + phosphate + NADP(+) = L-glutamyl 5-phosphate + NADPH + H(+). It functions in the pathway amino-acid biosynthesis; L-proline biosynthesis; L-glutamate 5-semialdehyde from L-glutamate: step 2/2. Functionally, catalyzes the NADPH-dependent reduction of L-glutamate 5-phosphate into L-glutamate 5-semialdehyde and phosphate. The product spontaneously undergoes cyclization to form 1-pyrroline-5-carboxylate. In Bordetella avium (strain 197N), this protein is Gamma-glutamyl phosphate reductase.